The sequence spans 669 residues: DNA ligase (669 aa).

NAD(+)-binding positions include 33–37 (DVTYD), 82–83 (SL), and Glu-115. Lys-117 serves as the catalytic N6-AMP-lysine intermediate. NAD(+) is bound by residues Arg-138, Glu-172, Lys-286, and Lys-310. The Zn(2+) site is built by Cys-401, Cys-404, Cys-417, and Cys-422. Residues 589–669 (IDSSFLFGKK…DIKNLVNLDD (81 aa)) form the BRCT domain.

Belongs to the NAD-dependent DNA ligase family. LigA subfamily. It depends on Mg(2+) as a cofactor. Requires Mn(2+) as cofactor.

The catalysed reaction is NAD(+) + (deoxyribonucleotide)n-3'-hydroxyl + 5'-phospho-(deoxyribonucleotide)m = (deoxyribonucleotide)n+m + AMP + beta-nicotinamide D-nucleotide.. Its function is as follows. DNA ligase that catalyzes the formation of phosphodiester linkages between 5'-phosphoryl and 3'-hydroxyl groups in double-stranded DNA using NAD as a coenzyme and as the energy source for the reaction. It is essential for DNA replication and repair of damaged DNA. The polypeptide is DNA ligase (Borrelia recurrentis (strain A1)).